The following is a 567-amino-acid chain: PEX5-related protein (567 aa).

The interval 56-105 (SEPVSQPQTKAKKSEPSSKSSSLKKKADGSDLISADAEQRAQALRGPETS) is disordered. Phosphoserine is present on serine 146. The segment at 150–169 (LWSAEHRSQPELSTGKSALN) is disordered. Phosphoserine occurs at positions 194, 198, and 202. TPR repeat units lie at residues 267–300 (WPGAFEEGLKRLKEGDLPVTILFMEAAILQDPGD), 301–334 (AEAWQFLGITQAENENEQAAIVALQRCLELQPNN), and 336–368 (KALMALAVSYTNTSHQQDACEALKNWIKQNPKY). Phosphoserine occurs at positions 386 and 388. TPR repeat units follow at residues 415–448 (PDLQTGLGVLFHLSGEFNRAIDAFNAALTVRPED), 450–482 (SLWNRLGATLANGDRSEEAVEAYTRALEIQPGF), and 484–516 (RSRYNLGISCINLGAYREAVSNFLTALSLQRKS).

The protein belongs to the peroxisomal targeting signal receptor family. As to quaternary structure, interacts with RAB8B. Forms an obligate 4:4 complex with HCN2. Interacts with HCN3. Interacts with HCN4 with a 4:4 HCN4:PEX5L stoichiometry; reduces the effects of cAMP on the voltage-dependence and rate of activation of HCN4.

Its subcellular location is the cytoplasm. The protein localises to the membrane. Functionally, accessory subunit of hyperpolarization-activated cyclic nucleotide-gated (HCN) channels, regulating their cell-surface expression and cyclic nucleotide dependence. The polypeptide is PEX5-related protein (Pex5l) (Mus musculus (Mouse)).